A 429-amino-acid chain; its full sequence is Glutamate-1-semialdehyde 2,1-aminomutase 2 (429 aa).

Lysine 267 is subject to N6-(pyridoxal phosphate)lysine.

The protein belongs to the class-III pyridoxal-phosphate-dependent aminotransferase family. HemL subfamily. In terms of assembly, homodimer. Pyridoxal 5'-phosphate is required as a cofactor.

The protein localises to the cytoplasm. It carries out the reaction (S)-4-amino-5-oxopentanoate = 5-aminolevulinate. It functions in the pathway porphyrin-containing compound metabolism; protoporphyrin-IX biosynthesis; 5-aminolevulinate from L-glutamyl-tRNA(Glu): step 2/2. The sequence is that of Glutamate-1-semialdehyde 2,1-aminomutase 2 from Brevibacillus brevis (strain 47 / JCM 6285 / NBRC 100599).